A 395-amino-acid chain; its full sequence is Protein pelota (395 aa).

The short motif at 210 to 212 (PGF) is the PGF motif element. Positions 371–395 (PELEDSDDDDDEDGAAGGVADSDSD) are disordered. Over residues 372–384 (ELEDSDDDDDEDG) the composition is skewed to acidic residues.

The protein belongs to the eukaryotic release factor 1 family. Pelota subfamily. In terms of assembly, component of the Pelota-HBS1L complex, also named Dom34-Hbs1 complex, composed of pelo and HBS1. Interacts with Pink1 and Cnot4; the interaction with Cnot4 appears to be Pink1-dependent. A divalent metal cation serves as cofactor. Expressed in ovaries and muscles (at protein level). Expressed throughout all development stages.

The protein resides in the nucleus. Its subcellular location is the cytoplasm. Component of the Pelota-HBS1L complex, a complex that recognizes stalled ribosomes and triggers the No-Go Decay (NGD) pathway. In the Pelota-HBS1L complex, pelo recognizes ribosomes stalled at the 3' end of an mRNA and engages stalled ribosomes by destabilizing mRNA in the mRNA channel. Following ribosome-binding, the Pelota-HBS1L complex promotes recruitment of pix, which drives the disassembly of stalled ribosomes, followed by degradation of damaged mRNAs as part of the NGD pathway. Required prior to the first meiotic division for spindle formation and nuclear envelope breakdown during spermatogenesis. Together with HBS1, promotes spermatid individualization during spermatogenesis. Required for ovarian germ line stem cell self-renewal and oocyte development during oogenesis. Together with HSB1, required for transposon silencing in the ovary and testis. As part of the Pink1-regulated signaling, is recruited to damaged mitochondrial and is required for recruitment of autophagy receptors and induction of mitophagy. Required for normal eye patterning and for mitotic divisions in the ovary. This Drosophila melanogaster (Fruit fly) protein is Protein pelota (pelo).